Consider the following 230-residue polypeptide: Lactate utilization protein C (230 aa).

This sequence belongs to the LutC/YkgG family.

Its function is as follows. Is involved in L-lactate degradation and allows cells to grow with lactate as the sole carbon source. The protein is Lactate utilization protein C of Exiguobacterium sp. (strain ATCC BAA-1283 / AT1b).